Consider the following 702-residue polypeptide: Elongation factor G (702 aa).

Residues 9–292 enclose the tr-type G domain; the sequence is DRTRNIGIMA…AVVDYLPSPL (284 aa). GTP-binding positions include 18–25, 91–95, and 145–148; these read AHIDAGKT, DTPGH, and NKMD.

It belongs to the TRAFAC class translation factor GTPase superfamily. Classic translation factor GTPase family. EF-G/EF-2 subfamily.

The protein resides in the cytoplasm. Functionally, catalyzes the GTP-dependent ribosomal translocation step during translation elongation. During this step, the ribosome changes from the pre-translocational (PRE) to the post-translocational (POST) state as the newly formed A-site-bound peptidyl-tRNA and P-site-bound deacylated tRNA move to the P and E sites, respectively. Catalyzes the coordinated movement of the two tRNA molecules, the mRNA and conformational changes in the ribosome. This is Elongation factor G from Oenococcus oeni (strain ATCC BAA-331 / PSU-1).